The chain runs to 617 residues: Chaperone protein HscA homolog (617 aa).

It belongs to the heat shock protein 70 family.

Functionally, probable chaperone. Has a low intrinsic ATPase activity which is markedly stimulated by HscB. The sequence is that of Chaperone protein HscA homolog from Vibrio parahaemolyticus serotype O3:K6 (strain RIMD 2210633).